Here is a 166-residue protein sequence, read N- to C-terminus: Gem-associated protein 6 (166 aa).

One can recognise a Sm domain in the interval 4–73; it reads WMKKGPLEWQ…VQTVEIVNEG (70 aa). Residues 68–166 form the AD domain; the sequence is EIVNEGDHSV…LIQGHLEASQ (99 aa). Residues Ser-94 and Ser-165 each carry the phosphoserine modification.

In terms of assembly, part of the core SMN complex that contains SMN1, GEMIN2/SIP1, DDX20/GEMIN3, GEMIN4, GEMIN5, GEMIN6, GEMIN7, GEMIN8 and STRAP/UNRIP. Part of the SMN-Sm complex that contains SMN1, GEMIN2/SIP1, DDX20/GEMIN3, GEMIN4, GEMIN5, GEMIN6, GEMIN7, GEMIN8, STRAP/UNRIP and the Sm proteins SNRPB, SNRPD1, SNRPD2, SNRPD3, SNRPE, SNRPF and SNRPG. Interacts with GEMIN7; the interaction is direct. Interacts with GEMIN8; the interaction is direct. Interacts with SNRPB, SNRPD2, SNRPD3 and SNRPE; the interaction is direct.

It is found in the nucleus. The protein localises to the nucleoplasm. Its subcellular location is the gem. It localises to the cytoplasm. The SMN complex catalyzes the assembly of small nuclear ribonucleoproteins (snRNPs), the building blocks of the spliceosome, and thereby plays an important role in the splicing of cellular pre-mRNAs. Most spliceosomal snRNPs contain a common set of Sm proteins SNRPB, SNRPD1, SNRPD2, SNRPD3, SNRPE, SNRPF and SNRPG that assemble in a heptameric protein ring on the Sm site of the small nuclear RNA to form the core snRNP (Sm core). In the cytosol, the Sm proteins SNRPD1, SNRPD2, SNRPE, SNRPF and SNRPG are trapped in an inactive 6S pICln-Sm complex by the chaperone CLNS1A that controls the assembly of the core snRNP. To assemble core snRNPs, the SMN complex accepts the trapped 5Sm proteins from CLNS1A forming an intermediate. Binding of snRNA inside 5Sm triggers eviction of the SMN complex, thereby allowing binding of SNRPD3 and SNRPB to complete assembly of the core snRNP. The protein is Gem-associated protein 6 (GEMIN6) of Bos taurus (Bovine).